Reading from the N-terminus, the 101-residue chain is MAAFQHRAKRSKNGASAKQGKISKADKKRAKLQVEKLDKRGVLLAELTAAAPAAKTGVLQAASLAQDQRSDAQAQQQRAQERSNVDKKVVQQLEAIAGFSL.

A compositionally biased stretch (basic residues) spans Met1–Lys12. 2 disordered regions span residues Met1–Ala30 and Ala65–Lys87. Residues Ala65–Arg78 show a composition bias toward low complexity.

This is an uncharacterized protein from Eremothecium gossypii (strain ATCC 10895 / CBS 109.51 / FGSC 9923 / NRRL Y-1056) (Yeast).